A 211-amino-acid polypeptide reads, in one-letter code: Protein TMA23 (211 aa).

The tract at residues 115–211 is disordered; sequence ASFVVSSASS…SARRDRKEHI (97 aa). Positions 116-125 are enriched in low complexity; the sequence is SFVVSSASSS. 3 stretches are compositionally biased toward basic residues: residues 140 to 149, 158 to 176, and 185 to 197; these read VKRKKLKKDK, KKKK…KKSK, and SKHK…KKHK. The segment covering 198–211 has biased composition (basic and acidic residues); it reads KEESSARRDRKEHI.

As to quaternary structure, forms homooligomers. Associates with ribosomal complexes.

It is found in the nucleus. The protein localises to the nucleolus. In terms of biological role, trans-acting factors of the ribosome biogenesis process. This is Protein TMA23 (TMA23) from Saccharomyces cerevisiae (strain ATCC 204508 / S288c) (Baker's yeast).